The chain runs to 291 residues: Serine hydrolase BPHL (291 aa).

A signal peptide spans 1 to 37; that stretch reads MVAVLGGRGVLRLRLLLSALKPGIHVPRAGPAAAFGT. Positions 62–181 constitute an AB hydrolase-1 domain; that stretch reads AVLLLPGMLG…DSMIYEGIRD (120 aa). N6-acetyllysine occurs at positions 86 and 119. Lys126 bears the N6-acetyllysine; alternate mark. Residue Lys126 is modified to N6-succinyllysine; alternate. Ser139 acts as the Nucleophile in catalysis. Lys184 is modified (N6-succinyllysine). Lys191 is subject to N6-acetyllysine; alternate. Lys191 is modified (N6-succinyllysine; alternate). At Lys217 the chain carries N6-acetyllysine. Asp221 is a Mg(2+) binding site. Position 243 is an N6-acetyllysine (Lys243). Asp244 acts as the Charge relay system in catalysis. N6-acetyllysine; alternate is present on residues Lys260 and Lys271. N6-succinyllysine; alternate is present on residues Lys260 and Lys271. His272 functions as the Charge relay system in the catalytic mechanism.

The protein belongs to the AB hydrolase superfamily. Lipase family. Monomer. May also form homodimers. In terms of tissue distribution, expressed at high levels in liver and kidney and lower levels in heart, intestine and skeletal muscle.

It is found in the mitochondrion. The catalysed reaction is L-homocysteine thiolactone + H2O = L-homocysteine + H(+). The enzyme catalyses valacyclovir + H2O = acyclovir + L-valine + H(+). Its function is as follows. Specific alpha-amino acid ester serine hydrolase that prefers small, hydrophobic, and aromatic side chains and does not have a stringent requirement for the leaving group other than preferring a primary alcohol. Has homocysteine-thiolactonase activity (in vitro) and may play a significant role in the detoxification of homocysteine thiolactone in vivo. Catalyzes the hydrolytic activation of amino acid ester prodrugs of nucleoside analogs such as valacyclovir and valganciclovir, converting them into their active forms (acyclovir and ganciclovir). The polypeptide is Serine hydrolase BPHL (BPHL) (Homo sapiens (Human)).